Here is a 156-residue protein sequence, read N- to C-terminus: Small ribosomal subunit protein uS7c (156 aa).

It belongs to the universal ribosomal protein uS7 family. In terms of assembly, part of the 30S ribosomal subunit.

Its subcellular location is the plastid. It is found in the chloroplast. In terms of biological role, one of the primary rRNA binding proteins, it binds directly to 16S rRNA where it nucleates assembly of the head domain of the 30S subunit. This Thalassiosira pseudonana (Marine diatom) protein is Small ribosomal subunit protein uS7c (rps7).